The chain runs to 326 residues: Target of rapamycin complex subunit LST8 (326 aa).

Position 1 is an N-acetylmethionine (methionine 1). 5 WD repeats span residues 1–37, 40–80, 83–122, 126–165, and 168–207; these read MNTTPGTVGSDPVILATAGYDHTVRFWQAHSGICTRT, HQDS…PIIS, GVSKNIASVGFHEDGRWMYTGGEDCTARIWDLRSRNLQCQ, QVNAPINCVCLHPNQAELIVGDQSGTSHIWDLKTDHNEQL, and EPEFSITSAHIDPDASYMAAVNSAGNCFVWNLTGGIGDEV. Residue threonine 51 is modified to Phosphothreonine. Lysine 86 is covalently cross-linked (Glycyl lysine isopeptide (Lys-Gly) (interchain with G-Cter in SUMO3)). Glycyl lysine isopeptide (Lys-Gly) (interchain with G-Cter in SUMO3) cross-links involve residues lysine 215, lysine 245, and lysine 261. The stretch at 218-257 is one WD 6 repeat; the sequence is AHTRYALQCRFSPDSTLLATCSADQTCKIWRTSNFSLMTE. Residues 268–309 form a WD 7 repeat; sequence SSRGWMWGCAFSGDSQYIVTASSDNLARLWCVETGEIKREYG. A Glycyl lysine isopeptide (Lys-Gly) (interchain with G-Cter in SUMO3); alternate cross-link involves residue lysine 305. Glycyl lysine isopeptide (Lys-Gly) (interchain with G-Cter in ubiquitin); alternate cross-links involve residues lysine 305 and lysine 313. Residue lysine 313 forms a Glycyl lysine isopeptide (Lys-Gly) (interchain with G-Cter in SUMO1); alternate linkage.

It belongs to the WD repeat LST8 family. As to quaternary structure, part of the mechanistic target of rapamycin complex 1 (mTORC1) which contains MTOR, MLST8 and RPTOR. mTORC1 associates with AKT1S1/PRAS40, which inhibits its activity. mTORC1 binds to and is inhibited by FKBP12-rapamycin. Within mTORC1, interacts directly with MTOR and RPTOR. Component of the mechanistic target of rapamycin complex 2 (mTORC2), consisting in two heterotretramers composed of MTOR, MLST8, RICTOR and MAPKAP1/SIN1. Contrary to mTORC1, mTORC2 does not bind to and is not sensitive to FKBP12-rapamycin. mTORC1 and mTORC2 associate with DEPTOR, which regulates their activity. Interacts with RHEB. Interacts with MEAK7. Interacts with SIK3. Interacts with SLC38A7; this interaction promotes the recruitment of mTORC1 to the lysosome and its subsequent activation. In terms of processing, phosphorylation at Thr-51 by CDK1 promotes ubiquitination by the SCF(FBXW7) complex, followed by degradation. Post-translationally, ubiquitination by the SCF(FBXW7) and SCF(FBXW11) complexes following phosphorylation at Thr-51 by CDK1, leads to its degradation by the proteasome. Ubiquitination at Lys-305 and Lys-313 by TRAF2 via 'Lys-63'-linked polyubiquitin chains inhibits formation of the mTORC2 complex, while promoting formation of the mTORC1 complex: ubiquitination disrupts the interaction between MLST8 and MAPKAP1/SIN1 to favor mTORC1 assembly. Deubiquitination at Lys-305 and Lys-313 by OTUD7B promotes MLST8 interaction with MAPKAP1/SIN1, facilitating mTORC2 assembly. Sumoylation with SUMO1, SUMO2 and SUMO3 promotes assembly of both mTORC1 and mTORC2 complexes. Expressed at highest levels in the brain and testis, followed by lung, heart, kidney, skeletal muscle, spleen and liver. Also expressed in epididymal, abdominal and brown fat, small intestine and pancreas.

The protein resides in the lysosome membrane. Its subcellular location is the cytoplasm. Its function is as follows. Subunit of both mTORC1 and mTORC2, which regulates cell growth and survival in response to nutrient and hormonal signals. mTORC1 is activated in response to growth factors or amino acids. In response to nutrients, mTORC1 is recruited to the lysosome membrane and promotes protein, lipid and nucleotide synthesis by phosphorylating several substrates, such as ribosomal protein S6 kinase (RPS6KB1 and RPS6KB2) and EIF4EBP1 (4E-BP1). In the same time, it inhibits catabolic pathways by phosphorylating the autophagy initiation components ULK1 and ATG13, as well as transcription factor TFEB, a master regulators of lysosomal biogenesis and autophagy. The mTORC1 complex is inhibited in response to starvation and amino acid depletion. Within mTORC1, MLST8 interacts directly with MTOR and enhances its kinase activity. In nutrient-poor conditions, stabilizes the MTOR-RPTOR interaction and favors RPTOR-mediated inhibition of MTOR activity. As part of the mTORC2 complex, transduces signals from growth factors to pathways involved in proliferation, cytoskeletal organization, lipogenesis and anabolic output. mTORC2 is also activated by growth factors, but seems to be nutrient-insensitive. In response to growth factors, mTORC2 phosphorylates and activates AGC protein kinase family members, including AKT (AKT1, AKT2 and AKT3), PKC (PRKCA, PRKCB and PRKCE) and SGK1. mTORC2 functions upstream of Rho GTPases to regulate the actin cytoskeleton, probably by activating one or more Rho-type guanine nucleotide exchange factors. mTORC2 promotes the serum-induced formation of stress-fibers or F-actin. mTORC2 plays a critical role in AKT1 activation by mediating phosphorylation of different sites depending on the context, such as 'Thr-450', 'Ser-473', 'Ser-477' or 'Thr-479', facilitating the phosphorylation of the activation loop of AKT1 on 'Thr-308' by PDPK1/PDK1 which is a prerequisite for full activation. mTORC2 regulates the phosphorylation of SGK1 at 'Ser-422'. mTORC2 also modulates the phosphorylation of PRKCA on 'Ser-657'. Within mTORC2, MLST8 acts as a bridge between MAPKAP1/SIN1 and MTOR. In Rattus norvegicus (Rat), this protein is Target of rapamycin complex subunit LST8.